The primary structure comprises 337 residues: Putative 2-aminoethylphosphonate-binding periplasmic protein (337 aa).

Residues 1-21 form the signal peptide; it reads MKLSRLALLSVFALASAPSWA.

It belongs to the bacterial solute-binding protein 1 family.

It is found in the periplasm. Functionally, probably part of the PhnSTUV complex (TC 3.A.1.11.5) involved in 2-aminoethylphosphonate import. The polypeptide is Putative 2-aminoethylphosphonate-binding periplasmic protein (phnS) (Salmonella paratyphi A (strain ATCC 9150 / SARB42)).